The primary structure comprises 495 residues: 3-octaprenyl-4-hydroxybenzoate carboxy-lyase (495 aa).

N172 is a binding site for Mn(2+). Prenylated FMN-binding positions include 175-177 (IYR), 189-191 (RWL), and 194-195 (RG). Residue E238 participates in Mn(2+) binding. The active-site Proton donor is the D287.

The protein belongs to the UbiD family. In terms of assembly, homohexamer. It depends on prenylated FMN as a cofactor. The cofactor is Mn(2+).

It is found in the cell membrane. The enzyme catalyses a 4-hydroxy-3-(all-trans-polyprenyl)benzoate + H(+) = a 2-(all-trans-polyprenyl)phenol + CO2. Its pathway is cofactor biosynthesis; ubiquinone biosynthesis. In terms of biological role, catalyzes the decarboxylation of 3-octaprenyl-4-hydroxy benzoate to 2-octaprenylphenol, an intermediate step in ubiquinone biosynthesis. The chain is 3-octaprenyl-4-hydroxybenzoate carboxy-lyase from Yersinia enterocolitica serotype O:8 / biotype 1B (strain NCTC 13174 / 8081).